Reading from the N-terminus, the 668-residue chain is Protein IQ-DOMAIN 14 (668 aa).

Positions 1–11 (MVKKGSWFSAI) are calmodulin-binding. Disordered regions lie at residues 16–54 (TPHS…FLPI) and 66–305 (GEAE…PRAV). The segment covering 18-31 (HSKEKLANEPERKS) has biased composition (basic and acidic residues). The segment covering 32 to 43 (GKEKKKKGFGKL) has biased composition (basic residues). Residues 78-96 (PPTPDRPNPYSASPPPRPA) show a composition bias toward pro residues. 2 stretches are compositionally biased toward low complexity: residues 97–120 (SPRV…SPRA) and 166–175 (PSSASANAPP). The span at 269 to 279 (PTTPKPPSPRS) shows a compositional bias: pro residues. IQ domains lie at 321-350 (QHAS…LVRL) and 343-372 (ALKG…YMQQ). Disordered stretches follow at residues 399–431 (AKWA…KTDA) and 476–561 (SPAP…SLTS). Basic and acidic residues predominate over residues 415–431 (VLTKEERDSRSQRKTDA). A compositionally biased stretch (polar residues) spans 516 to 529 (DTSTPRSSRSTFHT).

This sequence belongs to the IQD family. Binds to multiple calmodulin (CaM) in the presence of Ca(2+) and CaM-like proteins. In terms of tissue distribution, expressed in hypocotyls, cotyledons, leaves and petioles.

It is found in the cell membrane. It localises to the cytoplasm. The protein localises to the cytoskeleton. Its function is as follows. May be involved in cooperative interactions with calmodulins or calmodulin-like proteins. Recruits calmodulin proteins to microtubules, thus being a potential scaffold in cellular signaling and trafficking. Regulates cell and organ shapes (prevents twisting) in aerial parts probably by regulating transverse microtubules (MT) arrays alignment. Regulates the formation of oval xylem secondary cell-wall deposition pits through microtubule-dependent lateral inhibition of Rho GTPase domains, thus confining the area of active ROP domains within the lattice of the cortical microtubules. May associate with nucleic acids and regulate gene expression at the transcriptional or post-transcriptional level. This Arabidopsis thaliana (Mouse-ear cress) protein is Protein IQ-DOMAIN 14.